Here is a 478-residue protein sequence, read N- to C-terminus: Cytochrome c-552 (478 aa).

Positions Met-1–Ala-26 are cleaved as a signal peptide. His-94 provides a ligand contact to heme c. Residues Cys-122, Cys-125, and Lys-126 each contribute to the heme site. 6 residues coordinate heme c: Cys-160, Cys-163, His-164, Cys-209, Cys-212, and His-213. Ca(2+) contacts are provided by Glu-215, Tyr-216, Lys-261, and Gln-263. Position 216 (Tyr-216) interacts with substrate. His-264 serves as a coordination point for substrate. His-275, Cys-282, Cys-285, His-286, His-301, Cys-314, Cys-317, His-318, and His-393 together coordinate heme c.

The protein belongs to the cytochrome c-552 family. It depends on Ca(2+) as a cofactor. Heme c serves as cofactor.

Its subcellular location is the periplasm. It carries out the reaction 6 Fe(III)-[cytochrome c] + NH4(+) + 2 H2O = 6 Fe(II)-[cytochrome c] + nitrite + 8 H(+). Its pathway is nitrogen metabolism; nitrate reduction (assimilation). In terms of biological role, catalyzes the reduction of nitrite to ammonia, consuming six electrons in the process. In Citrobacter koseri (strain ATCC BAA-895 / CDC 4225-83 / SGSC4696), this protein is Cytochrome c-552.